The primary structure comprises 721 residues: YTH domain-containing protein 1 (721 aa).

Over residues 29-38 (EADIAEELQD) the composition is skewed to acidic residues. Residues 29 to 239 (EADIAEELQD…GGGTHSHSQK (211 aa)) form a disordered region. Residues 48–75 (SESNGGDSSDSEPSISSVSTATSSLAGS) are compositionally biased toward low complexity. Residues 135–151 (ASDKVKSKSPDTEDRQP) are compositionally biased toward basic and acidic residues. The 138-residue stretch at 254-391 (TRFFLIKSNN…KIGGELCRLF (138 aa)) folds into the YTH domain. Residues 260 to 262 (KSN), Trp-276, and Trp-327 each bind RNA. 3 disordered regions span residues 424–471 (PPRS…RHHH), 580–605 (DGPGAPPLPDYPPPQRPPPPGFDKAP), and 651–721 (AGGG…DNRR). The segment covering 432 to 443 (GHGGGGRGGGRG) has biased composition (gly residues). Positions 451 to 471 (PMRHKRSYHGAPHHRPYRHHH) are enriched in basic residues. Positions 583–600 (GAPPLPDYPPPQRPPPPG) are enriched in pro residues. Residues 651 to 670 (AGGGMGAGGGSGGGMGGPGG) are compositionally biased toward gly residues. The span at 699–708 (RDSRPFRERG) shows a compositional bias: basic and acidic residues.

The protein resides in the nucleus. Its function is as follows. Regulator of alternative splicing that specifically recognizes and binds N6-methyladenosine (m6A)-containing RNAs. Acts by acting as a reader of m6A methylation. Required for sex determination and dosage compensation via Sxl alternative splicing: m6A methylation acts as a key regulator of Sxl pre-mRNA and promotes female-specific alternative splicing of Sxl, which determines female physiognomy. M6A methylation is also required for neuronal functions. The sequence is that of YTH domain-containing protein 1 from Drosophila melanogaster (Fruit fly).